The primary structure comprises 354 residues: MEEFKRYFELDRYQQHDFLYPLIFQEYIYALAHDHGLNRSIFLENAGYDNKSSLLIVKRLITRMYQQNHFLISVNDSNQNQFLGHNKNFSYQMISEGFSVIVEIPFSLRLISSLEGKXIVXYPNLRSIHSIFPFLEDKFLHLNYVLDILIPYPIHLEILVQTLRHWVKDASSLHLLRFFLHEYRNWNSLITPKKXSFSCSKRNERLSLFLYNSHVXEYESIFVFLRNQSSHXRSTSSGALLERIHFYGKIELRVGVFAKDFQSXLWLFKDPFIHYVRXQGKSILASKGTXLLMNKWKYYLVNCWXCHFYVWSQPRNIYRNQLSNYSLDFLGYLSSXRLNTSMERSQMLENSYLI.

Belongs to the intron maturase 2 family. MatK subfamily.

The protein localises to the plastid. It is found in the chloroplast. In terms of biological role, usually encoded in the trnK tRNA gene intron. Probably assists in splicing its own and other chloroplast group II introns. The protein is Maturase K (matK) of Hydrangea quercifolia (Oakleaf hydrangea).